Reading from the N-terminus, the 200-residue chain is Pyrrolidone-carboxylate peptidase (200 aa).

Catalysis depends on residues Glu79, Cys142, and His166.

This sequence belongs to the peptidase C15 family. As to quaternary structure, homotetramer.

Its subcellular location is the cytoplasm. The enzyme catalyses Release of an N-terminal pyroglutamyl group from a polypeptide, the second amino acid generally not being Pro.. In terms of biological role, removes 5-oxoproline from various penultimate amino acid residues except L-proline. This chain is Pyrrolidone-carboxylate peptidase (pcp), found in Pyrococcus abyssi (strain GE5 / Orsay).